Consider the following 1572-residue polypeptide: Multiple epidermal growth factor-like domains protein 6 (1572 aa).

The first 26 residues, 1–26 (MPVGVEARASWRVVALTLLLLPAVPA), serve as a signal peptide directing secretion. Positions 40-121 (MPHVCAEQKL…QKPGQEGCLS (82 aa)) constitute an EMI domain. 36 cysteine pairs are disulfide-bonded: cysteine 44/cysteine 107, cysteine 73/cysteine 79, cysteine 106/cysteine 119, cysteine 126/cysteine 137, cysteine 133/cysteine 146, cysteine 148/cysteine 161, cysteine 167/cysteine 178, cysteine 174/cysteine 187, cysteine 189/cysteine 202, cysteine 291/cysteine 302, cysteine 298/cysteine 311, cysteine 313/cysteine 326, cysteine 418/cysteine 429, cysteine 425/cysteine 438, cysteine 440/cysteine 453, cysteine 522/cysteine 535, cysteine 529/cysteine 542, cysteine 544/cysteine 553, cysteine 566/cysteine 578, cysteine 572/cysteine 585, cysteine 587/cysteine 596, cysteine 609/cysteine 621, cysteine 615/cysteine 628, cysteine 630/cysteine 639, cysteine 788/cysteine 797, cysteine 791/cysteine 804, cysteine 806/cysteine 815, cysteine 832/cysteine 840, cysteine 834/cysteine 847, cysteine 849/cysteine 858, cysteine 871/cysteine 884, cysteine 875/cysteine 891, cysteine 893/cysteine 902, cysteine 915/cysteine 927, cysteine 921/cysteine 934, and cysteine 936/cysteine 945. Positions 122-162 (DVDECANANGGCEGPCCNTVGGFYCRCPPGYQLQGDGKTCQ) constitute an EGF-like 1; calcium-binding domain. The 41-residue stretch at 163–203 (DVDECRSHNGGCQHRCVNTPGSYLCECKPGFRLHTDGRTCL) folds into the EGF-like 2; calcium-binding domain. The 41-residue stretch at 287–327 (DVDECALGLAQCAHGCLNTQGSFKCVCHAGYELGADGRQCY) folds into the EGF-like 3; calcium-binding domain. One can recognise an EGF-like 4; calcium-binding domain in the interval 414–454 (DVDECASGHSGCEHHCSNLAGSFQCFCEAGYRLDEDRRGCT). EGF-like domains follow at residues 518-554 (FGHDCSLTCDDCRNGGTCFPGLDGCDCPEGWTGIICN), 562-597 (FGKNCSSPCICQNGGTCDPVSGACRCPPGVSGAHCE), 605-640 (YGKHCRKKCHCANRGRCHRLYGACLCDPGLYGRFCH), 785-816 (QEICPACEHGASCDPETGTCLCLPGFVGSRCQ), 829-859 (QMRCACANDGHCHPATGRCSCAPGWTGLSCQ), 867-903 (WGPDCIHPCNCSAGHGNCDAVSGLCLCEAGYEGPQCE), 911-946 (FGPGCEQKCRCEHGATCDHVSGACTCPAGWRGSFCE), 997-1032 (FGLNCSQICTCFNGASCDPVLGQCHCAPGWMGPTCL), 1040-1075 (YGKNCQHSCLCRNGGSCDPILGQCTCPEGWTGLACE), 1083-1118 (HGAGCRLNCSCLNGGTCDRLTGHCRCPAGWTGDKCQ), 1131-1161 (EEHCACRKGATCHHVTGACLCPPGWRGSHCE), 1169-1204 (FGEACAQRCHCPPGASCHHVSGECHCPPGFTGPGCE), 1256-1291 (YGPGCEQICKCLNGGTCDPATGACYCPAGFLGADCS), 1299-1334 (FGPSCAHVCTCGQGAACDPVSGTCICPPGKTGGHCE), 1342-1377 (FGKGCEHKCACRNGGLCHATNGSCSCPLGWMGPHCE), 1390-1420 (LLECSCQNNGSCEPTSGACLCGPGFYGQACE), and 1428-1463 (HGSGCQRVCECQQGAPCDPVSGRCLCPAGFRGQFCE). N-linked (GlcNAc...) asparagine glycosylation occurs at asparagine 1000. 30 disulfide bridges follow: cysteine 1001-cysteine 1013, cysteine 1007-cysteine 1020, cysteine 1022-cysteine 1031, cysteine 1044-cysteine 1056, cysteine 1050-cysteine 1063, cysteine 1065-cysteine 1074, cysteine 1087-cysteine 1099, cysteine 1093-cysteine 1106, cysteine 1108-cysteine 1117, cysteine 1134-cysteine 1142, cysteine 1136-cysteine 1149, cysteine 1151-cysteine 1160, cysteine 1173-cysteine 1185, cysteine 1177-cysteine 1192, cysteine 1194-cysteine 1203, cysteine 1260-cysteine 1272, cysteine 1266-cysteine 1279, cysteine 1281-cysteine 1290, cysteine 1303-cysteine 1315, cysteine 1309-cysteine 1322, cysteine 1324-cysteine 1333, cysteine 1346-cysteine 1358, cysteine 1352-cysteine 1365, cysteine 1367-cysteine 1376, cysteine 1393-cysteine 1401, cysteine 1395-cysteine 1408, cysteine 1410-cysteine 1419, cysteine 1432-cysteine 1444, cysteine 1438-cysteine 1451, and cysteine 1453-cysteine 1462.

It is found in the secreted. This chain is Multiple epidermal growth factor-like domains protein 6 (Megf6), found in Mus musculus (Mouse).